The chain runs to 216 residues: CASP-like protein 2U1 (216 aa).

The interval 1–30 (MKQDTEMGEATNGYIGTPGTVPVSHAGNDS) is disordered. The Cytoplasmic segment spans residues 1 to 37 (MKQDTEMGEATNGYIGTPGTVPVSHAGNDSGMRRMRT). Residues 38-58 (ASILMRLTAMALCVTALVTMV) traverse the membrane as a helical segment. At 59 to 86 (TDKQTHYFNFASTTIVKTAEYTNVLALK) the chain is on the extracellular side. The helical transmembrane segment at 87-107 (VFVYTNGVIAGYSLLQALWTI) threads the bilayer. Residues 108–128 (VAKSSYSTSKARLWTTFFLDQ) lie on the Cytoplasmic side of the membrane. The chain crosses the membrane as a helical span at residues 129 to 148 (FIVYVLIGVTGAATEVAYIA). At 149-170 (EKGESDVAWPKQCNNFGRFCSQ) the chain is on the extracellular side. The helical transmembrane segment at 171-191 (VGASVIVCFVAILTLVFLAVL) threads the bilayer. The Cytoplasmic segment spans residues 192–216 (SAKQLFIHERPSRTTRKDGYYTSNQ).

It belongs to the Casparian strip membrane proteins (CASP) family. As to quaternary structure, homodimer and heterodimers.

The protein resides in the cell membrane. The protein is CASP-like protein 2U1 of Marchantia polymorpha (Common liverwort).